Reading from the N-terminus, the 305-residue chain is Zinc transporter ZIP9 (305 aa).

A helical transmembrane segment spans residues 7–27 (ICLLSLAMLVACYVAGIIPLA). Asn-29 carries N-linked (GlcNAc...) asparagine glycosylation. The next 5 membrane-spanning stretches (helical) occupy residues 35–55 (LKLVTVLGAGLLCGTALAVIV), 104–124 (AYIGVSLVLGFVFMLLVDQIG), 144–164 (ITTTLGLVVHAAADGVALGAA), 174–194 (LIVFVAIMLHKAPAAFGLVSF), and 208–228 (HLLVFALAAPVMSMVTYLGLS). Asn-239 carries an N-linked (GlcNAc...) asparagine glycan. The next 2 helical transmembrane spans lie at 242 to 262 (GVAMLFSAGTFLYVATVHVLP) and 284 to 304 (LEVAALVLGCLIPLVLSIGHH).

It belongs to the ZIP transporter (TC 2.A.5) family.

It is found in the golgi apparatus. Its subcellular location is the trans-Golgi network membrane. The protein resides in the cell membrane. It localises to the cytoplasm. The protein localises to the perinuclear region. It is found in the mitochondrion. Its subcellular location is the nucleus. It catalyses the reaction Zn(2+)(in) = Zn(2+)(out). Transports zinc ions across cell and organelle membranes into the cytoplasm and regulates intracellular zinc homeostasis. Participates in the zinc ions efflux out of the secretory compartments. Regulates intracellular zinc level, resulting in the enhancement of AKT1 and MAPK3/MAPK1 (Erk1/2) phosphorylation in response to the BCR activation. Also functions as a membrane androgen receptor that mediates, through a G protein, the non-classical androgen signaling pathway, characterized by the activation of MAPK3/MAPK1 (Erk1/2) and transcription factors CREB1 or ATF1. Moreover, has dual functions as a membrane-bound androgen receptor and as an androgen-dependent zinc transporter both of which are mediated through an inhibitory G protein (Gi) that mediates both MAP kinase and zinc signaling leading to the androgen-dependent apoptotic process. The protein is Zinc transporter ZIP9 of Gallus gallus (Chicken).